Here is a 335-residue protein sequence, read N- to C-terminus: Ketol-acid reductoisomerase (NAD(P)(+)) (335 aa).

The region spanning 2–182 (AKIYKDEDIS…GCARAGVIES (181 aa)) is the KARI N-terminal Rossmann domain. Residues 25-28 (YGSQ), R49, S53, and 83-86 (DMVQ) contribute to the NADP(+) site. Residue H108 is part of the active site. G134 is a binding site for NADP(+). One can recognise a KARI C-terminal knotted domain in the interval 183-328 (TFKEETETDL…RKLREMMFRG (146 aa)). Mg(2+) is bound by residues D191, E195, E227, and E231. S252 contributes to the substrate binding site.

Belongs to the ketol-acid reductoisomerase family. Homodimer. Mg(2+) is required as a cofactor.

The enzyme catalyses (2R)-2,3-dihydroxy-3-methylbutanoate + NAD(+) = (2S)-2-acetolactate + NADH + H(+). It catalyses the reaction (2R)-2,3-dihydroxy-3-methylbutanoate + NADP(+) = (2S)-2-acetolactate + NADPH + H(+). It functions in the pathway amino-acid biosynthesis; L-isoleucine biosynthesis; L-isoleucine from 2-oxobutanoate: step 2/4. Its pathway is amino-acid biosynthesis; L-valine biosynthesis; L-valine from pyruvate: step 2/4. Its function is as follows. Involved in the biosynthesis of branched-chain amino acids (BCAA). Catalyzes an alkyl-migration followed by a ketol-acid reduction of (S)-2-acetolactate (S2AL) to yield (R)-2,3-dihydroxy-isovalerate. In the isomerase reaction, S2AL is rearranged via a Mg-dependent methyl migration to produce 3-hydroxy-3-methyl-2-ketobutyrate (HMKB). In the reductase reaction, this 2-ketoacid undergoes a metal-dependent reduction by NADPH or NADH to yield (R)-2,3-dihydroxy-isovalerate. The chain is Ketol-acid reductoisomerase (NAD(P)(+)) from Ignisphaera aggregans (strain DSM 17230 / JCM 13409 / AQ1.S1).